Here is a 323-residue protein sequence, read N- to C-terminus: tRNA U34 carboxymethyltransferase (323 aa).

Carboxy-S-adenosyl-L-methionine contacts are provided by residues K91, W105, K110, G130, 152-154 (DPS), 181-182 (IE), M196, Y200, and R315.

The protein belongs to the class I-like SAM-binding methyltransferase superfamily. CmoB family. Homotetramer.

The catalysed reaction is carboxy-S-adenosyl-L-methionine + 5-hydroxyuridine(34) in tRNA = 5-carboxymethoxyuridine(34) in tRNA + S-adenosyl-L-homocysteine + H(+). Its function is as follows. Catalyzes carboxymethyl transfer from carboxy-S-adenosyl-L-methionine (Cx-SAM) to 5-hydroxyuridine (ho5U) to form 5-carboxymethoxyuridine (cmo5U) at position 34 in tRNAs. The chain is tRNA U34 carboxymethyltransferase from Vibrio vulnificus (strain CMCP6).